We begin with the raw amino-acid sequence, 2085 residues long: Protein MLP1 homolog (2085 aa).

6 coiled-coil regions span residues 44-367 (KIRE…SHDG), 399-513 (KATQ…HVLI), 568-630 (YELQ…RMKS), 675-1205 (ANEA…KRTQ), 1232-1667 (LRRE…LQQE), and 1744-1799 (EIEA…AAKE). Residues 365-398 (HDGVPGSVPQTPRANGSLLARPSSPFGTPASLRG) are disordered. A disordered region spans residues 934–953 (AERLRPLPTPRAPAAAEQPS). The short motif at 1159–1166 (ERRQRLEQ) is the Nuclear localization signal element. A compositionally biased stretch (polar residues) spans 1482–1503 (LATATEKNTSLQQQLAASSTEQ). 2 disordered regions span residues 1482–1514 (LATA…AAPS) and 1567–1591 (SGGD…DEER). The segment covering 1504 to 1514 (PAAAPVSAAPS) has biased composition (low complexity). Residues 1574–1584 (AETSVSAQPSA) show a composition bias toward polar residues. A disordered region spans residues 1816–2085 (KPPAPAQAPA…GGGGGGGGNQ (270 aa)). Pro residues predominate over residues 1817-1827 (PPAPAQAPAPA). 3 stretches are compositionally biased toward low complexity: residues 1843-1858 (VAPA…QAPS), 1910-1974 (QAGQ…PVPA), and 1982-1994 (ARTA…AGPR). Positions 1995–2016 (GARGGRGGGFVGAGRGAGGAAG) are enriched in gly residues. Over residues 2028-2040 (GGATATAAAAAAA) the composition is skewed to low complexity. Gly residues-rich tracts occupy residues 2041 to 2051 (GGAGGSAGAGN) and 2076 to 2085 (GGGGGGGGNQ).

As to quaternary structure, the nuclear pore complex (NPC) constitutes the exclusive means of nucleocytoplasmic transport. NPCs allow the passive diffusion of ions and small molecules and the active, nuclear transport receptor-mediated bidirectional transport of macromolecules such as proteins, RNAs, ribonucleoparticles (RNPs), and ribosomal subunits across the nuclear envelope. The 55-60 MDa NPC is composed of at least 28 different subunits: AMO1, ELYS, GLE1, GLE2, MLP1, NDC1, NIC96, NSP1, NUP133, NUP145, NUP152, NUP159, NUP170, NUP188, NUP192, NUP37, NUP49, NUP53, NUP56, NUP57, NUP82, NUP84, NUP85, POM152, POM33, POM34, SEC13 and SEH1. Due to its 8-fold rotational symmetry, all subunits are present with 8 copies or multiples thereof.

The protein localises to the nucleus. Functionally, involved in the structural and functional organization of perinuclear chromatin. Associates with the nuclear pore complex and form filamentous structures along the nuclear periphery. This is Protein MLP1 homolog (MLP1) from Chaetomium thermophilum (strain DSM 1495 / CBS 144.50 / IMI 039719) (Thermochaetoides thermophila).